The primary structure comprises 549 residues: Peptide transport periplasmic protein SapA (549 aa).

An N-terminal signal peptide occupies residues 1–21; that stretch reads MRLVLSSLIVIAGLLSSQATA.

Belongs to the bacterial solute-binding protein 5 family.

The protein resides in the periplasm. Its function is as follows. Involved in a peptide intake transport system that plays a role in the resistance to antimicrobial peptides. The polypeptide is Peptide transport periplasmic protein SapA (Salmonella typhimurium (strain LT2 / SGSC1412 / ATCC 700720)).